A 180-amino-acid polypeptide reads, in one-letter code: UPF0340 protein BLi03936/BL03990 (180 aa).

It belongs to the UPF0340 family.

This is UPF0340 protein BLi03936/BL03990 from Bacillus licheniformis (strain ATCC 14580 / DSM 13 / JCM 2505 / CCUG 7422 / NBRC 12200 / NCIMB 9375 / NCTC 10341 / NRRL NRS-1264 / Gibson 46).